An 801-amino-acid polypeptide reads, in one-letter code: DNA mismatch repair protein MutS (801 aa).

Position 590-597 (Gly-590–Ser-597) interacts with ATP.

It belongs to the DNA mismatch repair MutS family.

Its function is as follows. This protein is involved in the repair of mismatches in DNA. It is possible that it carries out the mismatch recognition step. This protein has a weak ATPase activity. This is DNA mismatch repair protein MutS from Thermotoga neapolitana (strain ATCC 49049 / DSM 4359 / NBRC 107923 / NS-E).